Reading from the N-terminus, the 100-residue chain is Urease subunit gamma (100 aa).

The protein belongs to the urease gamma subunit family. As to quaternary structure, heterotrimer of UreA (gamma), UreB (beta) and UreC (alpha) subunits. Three heterotrimers associate to form the active enzyme.

The protein localises to the cytoplasm. The catalysed reaction is urea + 2 H2O + H(+) = hydrogencarbonate + 2 NH4(+). It functions in the pathway nitrogen metabolism; urea degradation; CO(2) and NH(3) from urea (urease route): step 1/1. In Mycolicibacterium gilvum (strain PYR-GCK) (Mycobacterium gilvum (strain PYR-GCK)), this protein is Urease subunit gamma.